A 106-amino-acid chain; its full sequence is MGKTNDWLDFDQLVEDSVRDALKPPSMYKVILVNDDYTPMEFVIDVLQKFFSYDVERATQLMFAVHYQGKAICGVFTAEVAETKVAMVNKYARENEHPLLCTLEKA.

Belongs to the ClpS family. In terms of assembly, binds to the N-terminal domain of the chaperone ClpA.

Involved in the modulation of the specificity of the ClpAP-mediated ATP-dependent protein degradation. This chain is ATP-dependent Clp protease adapter protein ClpS, found in Salmonella gallinarum (strain 287/91 / NCTC 13346).